The following is a 109-amino-acid chain: uncharacterized protein (109 aa).

A run of 3 helical transmembrane segments spans residues 16–36 (YIPL…YYGL), 54–74 (TVYF…LLCL), and 80–100 (FCSS…TLAM).

It is found in the membrane. This is an uncharacterized protein from Schizosaccharomyces pombe (strain 972 / ATCC 24843) (Fission yeast).